The chain runs to 266 residues: DNA-directed RNA polymerase subunit Rpo3 (266 aa).

The [3Fe-4S] cluster site is built by Cys205, Cys208, and Cys211.

Belongs to the archaeal Rpo3/eukaryotic RPB3 RNA polymerase subunit family. Part of the RNA polymerase complex. Requires [3Fe-4S] cluster as cofactor.

The protein localises to the cytoplasm. It catalyses the reaction RNA(n) + a ribonucleoside 5'-triphosphate = RNA(n+1) + diphosphate. In terms of biological role, DNA-dependent RNA polymerase (RNAP) catalyzes the transcription of DNA into RNA using the four ribonucleoside triphosphates as substrates. The sequence is that of DNA-directed RNA polymerase subunit Rpo3 from Methanosarcina acetivorans (strain ATCC 35395 / DSM 2834 / JCM 12185 / C2A).